The sequence spans 426 residues: PHD finger-containing protein 6 (426 aa).

The PHD-type zinc-finger motif lies at 9 to 59 (RSICETCGHQGWKNSLVTCSKCRIACEHCYCMRESSFETSIHFVCADCSMR). Positions 12, 15, 27, 30, 36, 39, 53, and 56 each coordinate Zn(2+). Disordered regions lie at residues 122 to 144 (TFRV…TAGF) and 185 to 205 (RQAS…GDGA).

Interacts directly with AIPP3/BDT1.

Together with AIPP3/BDT1, cooperates to form a BAH-PHD bivalent histone reader complex able to read histone H3 lysine 27 trimethylation (H3K27me3) histone marks in order to regulate transcription, especially to prevent early flowering; promotes AIPP3/BDT1 binding to H3K27me3. The polypeptide is PHD finger-containing protein 6 (Arabidopsis thaliana (Mouse-ear cress)).